The sequence spans 446 residues: Probable polyamine aminopropyl transferase (446 aa).

Residues 1 to 117 (MVEPAIGRNH…KRIACVVSAV (117 aa)) are unknown. Positions 64–94 (GRGAERWHRSPRQANGRFSNQRYSSTSPNSS) are disordered. The segment covering 75–94 (RQANGRFSNQRYSSTSPNSS) has biased composition (polar residues). The PABS domain maps to 116 to 351 (AVIFVATSCV…ELFAKKPGSG (236 aa)). The interval 118 to 353 (IFVATSCVSP…FAKKPGSGSE (236 aa)) is spermidine synthase. Residues Asn-147, Glu-226, and 251–252 (DG) each bind S-methyl-5'-thioadenosine. Asp-269 serves as the catalytic Proton acceptor.

Belongs to the spermidine/spermine synthase family. As to quaternary structure, homodimer or homotetramer.

It localises to the cytoplasm. It catalyses the reaction S-adenosyl 3-(methylsulfanyl)propylamine + putrescine = S-methyl-5'-thioadenosine + spermidine + H(+). Its pathway is amine and polyamine biosynthesis; spermidine biosynthesis; spermidine from putrescine: step 1/1. Its function is as follows. Catalyzes the irreversible transfer of a propylamine group from the amino donor S-adenosylmethioninamine (decarboxy-AdoMet) to putrescine (1,4-diaminobutane) to yield spermidine. The sequence is that of Probable polyamine aminopropyl transferase (speE) from Bifidobacterium longum (strain NCC 2705).